Reading from the N-terminus, the 498-residue chain is MTSSKNPTNDNSYFDAVLVGAGIMSSTLALLISEVLPDIKFLILEKLNAPGSESTGAFNNAGTGHAANCELNYTPLDEKGNLIIDKALSINRSFETSMSLWASLYEAGKIDIKKFLKFIPHISFVSGQDNISFLKKRFQKMTENPEFIDMEFSTSFDEISSWAPLITKDRNPSTQIAATRIDRGTDINFEALTKEYLSLVSLNKNVEIRYKTELVDLKKIDKKQWELEISSEGRKTSIRSGYVFLGAGGKTINYLQKSKIPEAKSYGGFPVSGKWLICEKKDLTEKHNSKVYGKADIGSPPMSVPHLDTRWIDNKKLLLYGPFAGFTTKFLKQSSYFDLFSSIKKNNIFSMLDVGFKNNDLINYLISQSLKNHNSRVENLKNMMPSANPSDWYLKNAGQRVQIIKKTEGGGSLKFGTEIVNSSDGSLSALLGASPGASTAVSIMVEVLEKSVLFLNDKHNLQKKINDLIYPELSVSENYSTFIKEIKKRNNSIFGFHP.

Belongs to the MQO family. FAD serves as cofactor.

The catalysed reaction is (S)-malate + a quinone = a quinol + oxaloacetate. The protein operates within carbohydrate metabolism; tricarboxylic acid cycle; oxaloacetate from (S)-malate (quinone route): step 1/1. The sequence is that of Probable malate:quinone oxidoreductase from Prochlorococcus marinus (strain AS9601).